The following is a 104-amino-acid chain: Large ribosomal subunit protein uL24 (104 aa).

It belongs to the universal ribosomal protein uL24 family. Part of the 50S ribosomal subunit.

Its function is as follows. One of two assembly initiator proteins, it binds directly to the 5'-end of the 23S rRNA, where it nucleates assembly of the 50S subunit. In terms of biological role, one of the proteins that surrounds the polypeptide exit tunnel on the outside of the subunit. The polypeptide is Large ribosomal subunit protein uL24 (Neorickettsia sennetsu (strain ATCC VR-367 / Miyayama) (Ehrlichia sennetsu)).